Here is a 121-residue protein sequence, read N- to C-terminus: MAFDKDAIIASLKEASISDLNDLVKAIEEEFDVSAAAPVAVAGAAGGDAAAKDSFTVELTEPGSAKVKVIKAVKDITGLGLKDAKDLVDGAPSAIKEDVKEDEANDIKEKLEAAGATVTLK.

Belongs to the bacterial ribosomal protein bL12 family. Homodimer. Part of the ribosomal stalk of the 50S ribosomal subunit. Forms a multimeric L10(L12)X complex, where L10 forms an elongated spine to which 2 to 4 L12 dimers bind in a sequential fashion. Binds GTP-bound translation factors.

In terms of biological role, forms part of the ribosomal stalk which helps the ribosome interact with GTP-bound translation factors. Is thus essential for accurate translation. The polypeptide is Large ribosomal subunit protein bL12 (Limosilactobacillus reuteri (strain DSM 20016) (Lactobacillus reuteri)).